Consider the following 281-residue polypeptide: Diaminopimelate epimerase (281 aa).

Residues N13 and N66 each contribute to the substrate site. Catalysis depends on C75, which acts as the Proton donor. Substrate contacts are provided by residues 76–77 (GN), N164, N197, and 215–216 (ER). Catalysis depends on C224, which acts as the Proton acceptor. 225-226 (GT) contributes to the substrate binding site.

The protein belongs to the diaminopimelate epimerase family. In terms of assembly, homodimer.

It is found in the cytoplasm. It carries out the reaction (2S,6S)-2,6-diaminopimelate = meso-2,6-diaminopimelate. It participates in amino-acid biosynthesis; L-lysine biosynthesis via DAP pathway; DL-2,6-diaminopimelate from LL-2,6-diaminopimelate: step 1/1. Functionally, catalyzes the stereoinversion of LL-2,6-diaminopimelate (L,L-DAP) to meso-diaminopimelate (meso-DAP), a precursor of L-lysine and an essential component of the bacterial peptidoglycan. The polypeptide is Diaminopimelate epimerase (Picosynechococcus sp. (strain ATCC 27264 / PCC 7002 / PR-6) (Agmenellum quadruplicatum)).